A 338-amino-acid chain; its full sequence is Glycerol-3-phosphate dehydrogenase [NAD(P)+] (338 aa).

NADPH contacts are provided by serine 13, tryptophan 14, and lysine 108. Sn-glycerol 3-phosphate-binding residues include lysine 108, glycine 139, and serine 141. Residue alanine 143 coordinates NADPH. Sn-glycerol 3-phosphate contacts are provided by lysine 194, aspartate 247, serine 257, arginine 258, and asparagine 259. The Proton acceptor role is filled by lysine 194. Arginine 258 serves as a coordination point for NADPH. Residues valine 282 and glutamate 284 each coordinate NADPH.

Belongs to the NAD-dependent glycerol-3-phosphate dehydrogenase family.

Its subcellular location is the cytoplasm. The catalysed reaction is sn-glycerol 3-phosphate + NAD(+) = dihydroxyacetone phosphate + NADH + H(+). It catalyses the reaction sn-glycerol 3-phosphate + NADP(+) = dihydroxyacetone phosphate + NADPH + H(+). Its pathway is membrane lipid metabolism; glycerophospholipid metabolism. In terms of biological role, catalyzes the reduction of the glycolytic intermediate dihydroxyacetone phosphate (DHAP) to sn-glycerol 3-phosphate (G3P), the key precursor for phospholipid synthesis. This is Glycerol-3-phosphate dehydrogenase [NAD(P)+] from Streptococcus agalactiae serotype V (strain ATCC BAA-611 / 2603 V/R).